The chain runs to 158 residues: Transcription elongation factor GreA (158 aa).

A coiled-coil region spans residues 49–69 (SEYESAKDEQAFVEGRISQIE). Residues 102–125 (EEPESYTIVGESESDPLSGKISNE) form a disordered region.

The protein belongs to the GreA/GreB family.

Necessary for efficient RNA polymerase transcription elongation past template-encoded arresting sites. The arresting sites in DNA have the property of trapping a certain fraction of elongating RNA polymerases that pass through, resulting in locked ternary complexes. Cleavage of the nascent transcript by cleavage factors such as GreA or GreB allows the resumption of elongation from the new 3'terminus. GreA releases sequences of 2 to 3 nucleotides. In Limosilactobacillus fermentum (strain NBRC 3956 / LMG 18251) (Lactobacillus fermentum), this protein is Transcription elongation factor GreA.